The chain runs to 280 residues: UPF0276 protein NMB2142 (280 aa).

The protein belongs to the UPF0276 family.

This is UPF0276 protein NMB2142 from Neisseria meningitidis serogroup B (strain ATCC BAA-335 / MC58).